The chain runs to 802 residues: Phenylalanine--tRNA ligase beta subunit (802 aa).

The region spanning 39 to 154 (AEGLSKLVVG…EDAVPGDSIF (116 aa)) is the tRNA-binding domain. The 76-residue stretch at 407 to 482 (TEPVQVSTSL…RIYGYEKLPT (76 aa)) folds into the B5 domain. 4 residues coordinate Mg(2+): aspartate 460, aspartate 466, glutamate 469, and glutamate 470. Residues 709 to 802 (TKFPAVSRDI…LTEKVEAEVR (94 aa)) enclose the FDX-ACB domain.

The protein belongs to the phenylalanyl-tRNA synthetase beta subunit family. Type 1 subfamily. As to quaternary structure, tetramer of two alpha and two beta subunits. It depends on Mg(2+) as a cofactor.

It localises to the cytoplasm. It carries out the reaction tRNA(Phe) + L-phenylalanine + ATP = L-phenylalanyl-tRNA(Phe) + AMP + diphosphate + H(+). This chain is Phenylalanine--tRNA ligase beta subunit, found in Streptococcus thermophilus (strain CNRZ 1066).